The following is a 726-amino-acid chain: Netrin-A (726 aa).

The first 29 residues, 1-29, serve as a signal peptide directing secretion; sequence MIRGILLLLLGTTRFSPIQCISNDVYFKM. The 267-residue stretch at 46 to 312 folds into the Laminin N-terminal domain; it reads EPRACIPDFV…AISDFSVGGR (267 aa). 3 N-linked (GlcNAc...) asparagine glycosylation sites follow: N108, N112, and N127. 12 disulfides stabilise this stretch: C313–C322, C315–C332, C334–C343, C346–C366, C369–C378, C371–C396, C399–C408, C411–C429, C432–C444, C434–C451, C453–C462, and C465–C479. 3 consecutive Laminin EGF-like domains span residues 313–368, 369–431, and 432–481; these read CKCN…ECKE, CNCN…VCKA, and CDCH…PCIK. A glycan (N-linked (GlcNAc...) asparagine) is linked at N445. The interval 490 to 516 is disordered; sequence LDTQNTAPEPDEPESSPGSGGDRNGAA. 2 disulfides stabilise this stretch: C533/C671 and C549/C725. Residues 533-725 enclose the NTR domain; the sequence is CGKCRVSTKR…KRFQRRARTC (193 aa). N-linked (GlcNAc...) asparagine glycosylation is found at N652 and N679.

As to expression, at the midline of developing CNS at the time of commissure formation and in different subsets of neurons, muscles, and epidermal patches.

It localises to the secreted. The protein resides in the extracellular space. Its subcellular location is the extracellular matrix. Netrins control guidance of CNS commissural axons at the midline and peripheral motor axons to their target muscles. This chain is Netrin-A (NetA), found in Drosophila melanogaster (Fruit fly).